We begin with the raw amino-acid sequence, 171 residues long: UPF0398 protein SEQ_1788 (171 aa).

The protein belongs to the UPF0398 family.

In Streptococcus equi subsp. equi (strain 4047), this protein is UPF0398 protein SEQ_1788.